We begin with the raw amino-acid sequence, 325 residues long: 4-hydroxy-3-methylbut-2-enyl diphosphate reductase (325 aa).

Cys-21 lines the [4Fe-4S] cluster pocket. (2E)-4-hydroxy-3-methylbut-2-enyl diphosphate-binding residues include His-50 and His-83. Residues His-50 and His-83 each coordinate dimethylallyl diphosphate. The isopentenyl diphosphate site is built by His-50 and His-83. A [4Fe-4S] cluster-binding site is contributed by Cys-105. His-133 provides a ligand contact to (2E)-4-hydroxy-3-methylbut-2-enyl diphosphate. His-133 provides a ligand contact to dimethylallyl diphosphate. An isopentenyl diphosphate-binding site is contributed by His-133. Glu-135 serves as the catalytic Proton donor. A (2E)-4-hydroxy-3-methylbut-2-enyl diphosphate-binding site is contributed by Thr-173. Cys-203 lines the [4Fe-4S] cluster pocket. Ser-231, Ser-232, Asn-233, and Ser-275 together coordinate (2E)-4-hydroxy-3-methylbut-2-enyl diphosphate. Dimethylallyl diphosphate is bound by residues Ser-231, Ser-232, Asn-233, and Ser-275. Residues Ser-231, Ser-232, Asn-233, and Ser-275 each coordinate isopentenyl diphosphate.

It belongs to the IspH family. Requires [4Fe-4S] cluster as cofactor.

It carries out the reaction isopentenyl diphosphate + 2 oxidized [2Fe-2S]-[ferredoxin] + H2O = (2E)-4-hydroxy-3-methylbut-2-enyl diphosphate + 2 reduced [2Fe-2S]-[ferredoxin] + 2 H(+). It catalyses the reaction dimethylallyl diphosphate + 2 oxidized [2Fe-2S]-[ferredoxin] + H2O = (2E)-4-hydroxy-3-methylbut-2-enyl diphosphate + 2 reduced [2Fe-2S]-[ferredoxin] + 2 H(+). It participates in isoprenoid biosynthesis; dimethylallyl diphosphate biosynthesis; dimethylallyl diphosphate from (2E)-4-hydroxy-3-methylbutenyl diphosphate: step 1/1. It functions in the pathway isoprenoid biosynthesis; isopentenyl diphosphate biosynthesis via DXP pathway; isopentenyl diphosphate from 1-deoxy-D-xylulose 5-phosphate: step 6/6. In terms of biological role, catalyzes the conversion of 1-hydroxy-2-methyl-2-(E)-butenyl 4-diphosphate (HMBPP) into a mixture of isopentenyl diphosphate (IPP) and dimethylallyl diphosphate (DMAPP). Acts in the terminal step of the DOXP/MEP pathway for isoprenoid precursor biosynthesis. The sequence is that of 4-hydroxy-3-methylbut-2-enyl diphosphate reductase from Bordetella pertussis (strain Tohama I / ATCC BAA-589 / NCTC 13251).